A 674-amino-acid polypeptide reads, in one-letter code: Kelch repeat and BTB domain-containing protein 6 (674 aa).

The segment at 1-28 (MQSREDAPRSRRLASPRGGKRPKKIHKP) is disordered. The segment covering 10–27 (SRRLASPRGGKRPKKIHK) has biased composition (basic residues). The BTB domain maps to 63 to 138 (CDVTIEVVTP…CYTGRVSLSE (76 aa)). Kelch repeat units lie at residues 386 to 435 (AVCI…YLNG), 436 to 484 (YIYI…VIRD), 486 to 523 (LYALNSKRMFCYDPSHNMWLKCVSLKRNDFQEACVFNE), 524 to 564 (EIYC…IIKH), 567 to 616 (KLLL…CLSA), and 642 to 673 (TEWDLGGFSEPDSESGSSSSLSDDDFWVRVAP). A disordered region spans residues 631 to 674 (TEEEEIPSESSTEWDLGGFSEPDSESGSSSSLSDDDFWVRVAPQ). The ATG8 interaction motif (AIM) signature appears at 668–671 (WVRV).

As to quaternary structure, core component of a BCR3 (BTB-CUL3-RBX1) E3 ubiquitin ligase complex, also named Cul3-RING ubiquitin ligase complex CUL3(KBTBD6/7), composed of CUL3, RBX1, KBTBD6 and KBTBD7. Interacts with GABARAP; the interaction is direct and is required for the ubiquitination of TIAM1. Interacts with GABARAPL1, GABARAPL2 and MAP1LC3B; the interaction is direct.

The protein localises to the cytoplasm. It is found in the nucleus. It functions in the pathway protein modification; protein ubiquitination. Its function is as follows. As part of the CUL3(KBTBD6/7) E3 ubiquitin ligase complex functions as a substrate adapter for the RAC1 guanine exchange factor (GEF) TIAM1, mediating its 'Lys-48' ubiquitination and proteasomal degradation. By controlling this ubiquitination, regulates RAC1 signal transduction and downstream biological processes including the organization of the cytoskeleton, cell migration and cell proliferation. Ubiquitination of TIAM1 requires the membrane-associated protein GABARAP which may restrict locally the activity of the complex. The protein is Kelch repeat and BTB domain-containing protein 6 of Homo sapiens (Human).